Consider the following 557-residue polypeptide: Organic cation/carnitine transporter 2 (557 aa).

The Cytoplasmic segment spans residues 1 to 20 (MRDYDEVTAFLGEWGPFQRL). A helical membrane pass occupies residues 21–41 (IFFLLSASIIPNGFTGLSSVF). The Extracellular portion of the chain corresponds to 42–142 (LIATPEHRCR…NLVCEDDWKA (101 aa)). 3 N-linked (GlcNAc...) asparagine glycosylation sites follow: asparagine 57, asparagine 64, and asparagine 91. The chain crosses the membrane as a helical span at residues 143 to 163 (PLTISLFFVGVLLGSFISGQL). The Cytoplasmic segment spans residues 164–172 (SDRFGRKNV). A helical membrane pass occupies residues 173–193 (LFVTMGMQTGFSFLQIFSKNF). The Extracellular segment spans residues 194-197 (EMFV). A helical membrane pass occupies residues 198 to 218 (VLFVLVGMGQISNYVAAFVLG). 218–225 (GTEILGKS) contributes to the ATP binding site. Topologically, residues 219 to 232 (TEILGKSVRIIFST) are cytoplasmic. The helical transmembrane segment at 233–253 (LGVCIFYAFGYMVLPLFAYFI) threads the bilayer. Over 254 to 257 (RDWR) the chain is Extracellular. A helical membrane pass occupies residues 258-278 (MLLVALTMPGVLCVALWWFIP). Topologically, residues 279 to 341 (ESPRWLISQG…LDLLRTWNIR (63 aa)) are cytoplasmic. A helical transmembrane segment spans residues 342-362 (MVTIMSIMLWMTISVGYFGLS). Topologically, residues 363-373 (LDTPNLHGDIF) are extracellular. A helical membrane pass occupies residues 374-394 (VNCFLSAMVEVPAYVLAWLLL). The Cytoplasmic segment spans residues 395–406 (QYLPRRYSMATA). The helical transmembrane segment at 407-427 (LFLGGSVLLFMQLVPPDLYYL) threads the bilayer. Residues 428–430 (ATV) lie on the Extracellular side of the membrane. The chain crosses the membrane as a helical span at residues 431–451 (LVMVGKFGVTAAFSMVYVYTA). Topologically, residues 452-462 (ELYPTVVRNMG) are cytoplasmic. A helical transmembrane segment spans residues 463 to 483 (VGVSSTASRLGSILSPYFVYL). The Extracellular portion of the chain corresponds to 484–488 (GAYDR). The residue at position 486 (tyrosine 486) is a Phosphotyrosine. The chain crosses the membrane as a helical span at residues 489–509 (FLPYILMGSLTILTAILTLFL). Residues 535-557 (TPSHTRMLKDGQERPTILKSTAF) form a disordered region. Threonine 550 bears the Phosphothreonine mark.

It belongs to the major facilitator (TC 2.A.1) superfamily. Organic cation transporter (TC 2.A.1.19) family. In terms of assembly, interacts with PDZK1. Glycosylated. Glycosylation affects the expression levels. Post-translationally, not glycosylated. As to expression, strongly expressed in kidney, skeletal muscle, heart and placenta. Primarily expressed by surface epithelial cells of the colon (at protein level). Expressed in CD68 macrophage and CD43 T-cells but not in CD20 B-cells. In testis, localized to Sertoli cell basal membranes, peritubular myoid cells and Leydig cells.

The protein localises to the cell membrane. Its subcellular location is the apical cell membrane. It localises to the basal cell membrane. It is found in the endoplasmic reticulum. It catalyses the reaction (R)-carnitine(out) + Na(+)(out) = (R)-carnitine(in) + Na(+)(in). The catalysed reaction is glycine betaine(out) + Na(+)(out) = glycine betaine(in) + Na(+)(in). It carries out the reaction glycine betaine(out) + (R)-carnitine(in) = glycine betaine(in) + (R)-carnitine(out). The enzyme catalyses O-butanoyl-(R)-carnitine(out) + Na(+)(out) = O-butanoyl-(R)-carnitine(in) + Na(+)(in). It catalyses the reaction O-acetyl-(R)-carnitine(out) + Na(+)(out) = O-acetyl-(R)-carnitine(in) + Na(+)(in). The catalysed reaction is O-propanoyl-(R)-carnitine(out) + Na(+)(out) = O-propanoyl-(R)-carnitine(in) + Na(+)(in). It carries out the reaction (S)-carnitine(out) + Na(+)(out) = (S)-carnitine(in) + Na(+)(in). The enzyme catalyses an O-acyl-(R)-carnitine(out) + Na(+)(out) = an O-acyl-(R)-carnitine(in) + Na(+)(in). It catalyses the reaction L-glutamyl-L-arginyl-glycyl-L-methionyl-L-threonine(out) + Na(+)(out) = L-glutamyl-L-arginyl-glycyl-L-methionyl-L-threonine(in) + Na(+)(in). The catalysed reaction is N,N-dimethylglycine(out) + Na(+)(out) = N,N-dimethylglycine(in) + Na(+)(in). With respect to regulation, inhibited by emetine, quinidine and verapamil. The IC(50) of emetine is 4.2 uM. Not inhibited by valproic acid. Transport of (R)-carnitine is stimulated by cholesterol in the plasma membrane. Functionally, sodium-ion dependent, high affinity carnitine transporter. Involved in the active cellular uptake of carnitine. Transports one sodium ion with one molecule of carnitine. Also transports organic cations such as tetraethylammonium (TEA) without the involvement of sodium. Relative uptake activity ratio of carnitine to TEA is 11.3. In intestinal epithelia, transports the quorum-sensing pentapeptide CSF (competence and sporulation factor) from B.subtilis which induces cytoprotective heat shock proteins contributing to intestinal homeostasis. May also contribute to regulate the transport of organic compounds in testis across the blood-testis-barrier. In terms of biological role, retained in the ER, unable to perform carnitine uptake. The chain is Organic cation/carnitine transporter 2 from Homo sapiens (Human).